The primary structure comprises 321 residues: uncharacterized protein (321 aa).

Catalysis depends on tyrosine 49, which acts as the Proton donor. Residue histidine 106 participates in substrate binding.

This sequence belongs to the aldo/keto reductase family.

This is an uncharacterized protein from Caenorhabditis elegans.